Reading from the N-terminus, the 442-residue chain is Cysteine proteinase 4 (442 aa).

An N-terminal signal peptide occupies residues 1 to 17; sequence MRVLSFLCLLLVSYASA. Positions 18–111 are cleaved as a propeptide — activation peptide; sequence KQQFSELQYR…TEEEKIFSTP (94 aa). 2 cysteine pairs are disulfide-bonded: cysteine 132–cysteine 178 and cysteine 169–cysteine 212. Cysteine 135 is an active-site residue. Residues asparagine 228 and asparagine 254 are each glycosylated (N-linked (GlcNAc...) asparagine). Cysteine 270 and cysteine 428 are disulfide-bonded. Residue histidine 277 is part of the active site. A disordered region spans residues 286 to 396; it reads SGSSSSSGSS…SGSGSGAVEA (111 aa). Residues 287–376 show a composition bias toward low complexity; it reads GSSSSSGSSS…SASGQASASG (90 aa). A compositionally biased stretch (gly residues) spans 377-391; that stretch reads SGSGSGSGSGSGSGS. Residue asparagine 406 is part of the active site.

It belongs to the peptidase C1 family. Glycosylated; contains GlcNAc-alpha-1-P-Ser residues and fucose.

The protein localises to the lysosome. In Dictyostelium discoideum (Social amoeba), this protein is Cysteine proteinase 4 (cprD).